A 729-amino-acid chain; its full sequence is Sodium-dependent neutral amino acid transporter B(0)AT2 (729 aa).

Over 1–69 the chain is Cytoplasmic; the sequence is MPKNSKVVKR…ERPAWNSKLQ (69 aa). Phosphoserine is present on residues S25 and S55. A run of 3 helical transmembrane segments spans residues 70 to 90, 98 to 117, and 142 to 162; these read YILA…FPYL, AYLL…LFFL, and GIGF…NVII. Topologically, residues 163-225 are extracellular; it reads GWTLFYFSQS…SSISESGGLN (63 aa). N187 carries N-linked (GlcNAc...) asparagine glycosylation. 4 helical membrane passes run 226–244, 253–270, 306–323, and 335–356; these read WKMT…LAMI, IMYF…CFLI, VFFA…FSSY, and VLVS…FAVL. The Extracellular segment spans residues 357–452; the sequence is GFKANIVNEK…FIAFTEAMTH (96 aa). 2 N-linked (GlcNAc...) asparagine glycosylation sites follow: N383 and N394. Helical transmembrane passes span 453 to 472, 496 to 514, 530 to 550, 571 to 592, and 620 to 642; these read FPAS…NLGL, ILTV…MFVQ, TLPL…VYGI, YMWK…IVNM, and VVCF…IRRC. Topologically, residues 643 to 729 are cytoplasmic; it reads NLIDDSSGNL…DMPDMPESDL (87 aa). S687, S699, and S701 each carry phosphoserine.

This sequence belongs to the sodium:neurotransmitter symporter (SNF) (TC 2.A.22) family. SLC6A15 subfamily. In terms of tissue distribution, widely distributed in the central nervous system, including the olfactory bulb, the hypothalamus, the cerebral cortex, the hippocampus, and the cerebellum. In addition, intense expression is found in the motor nuclei including the oculomotor nucleus, abducens nucleus, trigeminal motor nucleus, facial nucleus, hypoglossal nucleus and ventral horn of spinal cord. Intense hybridization signals are also observed in the nuclei containing monoaminergic neurons, such as locus coeruleus, the substantia nigra pars compacta, the ventral tegmental area, the dorsal raphe nucleus and the median raphe nucleus.

It is found in the membrane. The catalysed reaction is L-leucine(in) + Na(+)(in) = L-leucine(out) + Na(+)(out). It carries out the reaction L-isoleucine(in) + Na(+)(in) = L-isoleucine(out) + Na(+)(out). It catalyses the reaction L-methionine(in) + Na(+)(in) = L-methionine(out) + Na(+)(out). The enzyme catalyses L-proline(in) + Na(+)(in) = L-proline(out) + Na(+)(out). The catalysed reaction is L-alanine(in) + Na(+)(in) = L-alanine(out) + Na(+)(out). It carries out the reaction L-asparagine(in) + Na(+)(in) = L-asparagine(out) + Na(+)(out). It catalyses the reaction L-valine(in) + Na(+)(in) = L-valine(out) + Na(+)(out). The enzyme catalyses L-cysteine(in) + Na(+)(in) = L-cysteine(out) + Na(+)(out). The catalysed reaction is L-glutamine(in) + Na(+)(in) = L-glutamine(out) + Na(+)(out). It carries out the reaction L-serine(in) + Na(+)(in) = L-serine(out) + Na(+)(out). It catalyses the reaction L-threonine(in) + Na(+)(in) = L-threonine(out) + Na(+)(out). The enzyme catalyses L-pipecolate(in) + Na(+)(in) = L-pipecolate(out) + Na(+)(out). The catalysed reaction is L-phenylalanine(in) + Na(+)(in) = L-phenylalanine(out) + Na(+)(out). Its function is as follows. Functions as a sodium-dependent neutral amino acid transporter. Exhibits preference for the branched-chain amino acids, particularly leucine, valine and isoleucine and methionine. Can also transport low-affinity substrates such as alanine, phenylalanine, glutamine and pipecolic acid. Mediates the saturable, pH-sensitive and electrogenic cotransport of proline and sodium ions with a stoichiometry of 1:1. May have a role as transporter for neurotransmitter precursors into neurons. In contrast to other members of the neurotransmitter transporter family, does not appear to be chloride-dependent. The polypeptide is Sodium-dependent neutral amino acid transporter B(0)AT2 (Slc6a15) (Rattus norvegicus (Rat)).